The chain runs to 257 residues: Sad1-interacting factor 1 (257 aa).

Positions 16 to 68 (LNKIKQGGASRINQILGQNSDDSQSDVRATASEEAVHSETATPVTPMSSGFME) are disordered. Composition is skewed to polar residues over residues 26 to 37 (RINQILGQNSDD) and 54 to 63 (ETATPVTPMS). Residue S35 is modified to Phosphoserine. S132 bears the Phosphoserine mark. A Phosphothreonine modification is found at T134. Helical transmembrane passes span 160-180 (LLAI…LLPW) and 231-251 (FTQL…CCYF).

In terms of assembly, interacts with kms1 and sad1.

The protein localises to the membrane. In Schizosaccharomyces pombe (strain 972 / ATCC 24843) (Fission yeast), this protein is Sad1-interacting factor 1 (sif1).